The sequence spans 257 residues: Staphylococcal secretory antigen SsaA (257 aa).

The first 26 residues, 1–26, serve as a signal peptide directing secretion; it reads MKKIATATIATAGIATFAFAHHDAQA. Repeat copies occupy residues 73-75, 76-78, 84-86, 87-89, 90-92, 93-95, 96-98, and 99-101. The 8 X 3 AA repeats of Y-[NS]-N stretch occupies residues 73-101; that stretch reads YNNYNNYNYYGYNNYSNYNNYSNYNNYNN. The interval 101 to 144 is disordered; that stretch reads NYQSNNTQSQRTTQPTGGLGASYSTSSSNVHVTTTSAPSSNGVS. The segment covering 107 to 116 has biased composition (polar residues); sequence TQSQRTTQPT. Over residues 122-136 the composition is skewed to low complexity; that stretch reads SYSTSSSNVHVTTTS. Positions 136–257 constitute a Peptidase C51 domain; the sequence is SAPSSNGVSL…SQAASYNYIH (122 aa).

The protein resides in the secreted. Its function is as follows. Not known; immunogenic protein expressed during sepsis and particularly during episodes of infective endocarditis. This is Staphylococcal secretory antigen SsaA (ssaA) from Staphylococcus epidermidis.